A 722-amino-acid polypeptide reads, in one-letter code: Pesticidal crystal protein Cry22Aa (722 aa).

Its function is as follows. Promotes colloidosmotic lysis by binding to the midgut epithelial cells of hymenopteran species. The chain is Pesticidal crystal protein Cry22Aa (cry22Aa) from Bacillus thuringiensis.